We begin with the raw amino-acid sequence, 400 residues long: Cytohesin-3 (400 aa).

Residues 14–61 (EDLSLEEREELLDIRRRKKELIDDIERLKYEIAEVMTEIDNLTSVEES) are a coiled coil. The SEC7 domain occupies 77–206 (FNMDPKKGIQ…IIMLNTSLHN (130 aa)). In terms of domain architecture, PH spans 264–381 (NPDREGWLLK…WMKSIKASIS (118 aa)). Residues 273–281 (KLGGGRVKT), R285, Y296, R306, and N355 each bind a 1,2-diacyl-sn-glycero-3-phospho-(1D-myo-inositol-3,4,5-trisphosphate). Positions 392 to 400 (RKRRIANKK) are C-terminal autoinhibitory region.

Interacts with TAMALIN. Interacts with ARF6. Interacts with FRMD4A. Interacts with FRMD4B. In terms of tissue distribution, almost absent from liver, thymus and peripheral blood lymphocytes.

It is found in the cytoplasm. The protein resides in the cytosol. Its subcellular location is the cell membrane. The protein localises to the cell junction. It localises to the adherens junction. It is found in the tight junction. Promotes guanine-nucleotide exchange on ARF1 and ARF6. Promotes the activation of ARF factors through replacement of GDP with GTP. Plays a role in the epithelial polarization. This chain is Cytohesin-3, found in Homo sapiens (Human).